Here is a 1685-residue protein sequence, read N- to C-terminus: Myomesin-1 (1685 aa).

Residues lysine 33–serine 80 form a disordered region. Composition is skewed to low complexity over residues glutamine 41–serine 51 and arginine 63–serine 80. Serine 113 is modified (phosphoserine). A disordered region spans residues glycine 177–valine 244. Over residues threonine 179–serine 220 the composition is skewed to low complexity. A run of 6 repeats spans residues lysine 182–serine 187, lysine 188–serine 193, lysine 194–serine 199, lysine 200–serine 205, lysine 206–serine 211, and arginine 212–serine 217. The tract at residues lysine 182–serine 217 is 6 X 6 AA tandem repeats. A compositionally biased stretch (polar residues) spans valine 221–glutamate 233. Ig-like C2-type domains follow at residues proline 277 to valine 368 and proline 396 to phenylalanine 498. 3 Fibronectin type-III domains span residues alanine 512 to proline 607, proline 640 to aspartate 734, and alanine 741 to alanine 834. The disordered stretch occupies residues serine 840 to cysteine 938. The segment covering leucine 874–serine 888 has biased composition (low complexity). Phosphoserine occurs at positions 883 and 887. The span at glutamine 889–threonine 902 shows a compositional bias: polar residues. Basic and acidic residues predominate over residues serine 920–arginine 931. 2 Fibronectin type-III domains span residues proline 933–tryptophan 1034 and proline 1041–glycine 1140. Serine 1054 is modified (phosphoserine). Ig-like C2-type domains are found at residues proline 1132 to lysine 1230, proline 1358 to valine 1444, and arginine 1573 to serine 1662. A disulfide bond links cysteine 1160 and cysteine 1210.

In terms of assembly, homodimer. Interacts with TTN/titin. Interacts with PNKD.

The protein localises to the cytoplasm. It localises to the myofibril. It is found in the sarcomere. Its subcellular location is the m line. Major component of the vertebrate myofibrillar M band. Binds myosin, titin, and light meromyosin. This binding is dose dependent. The protein is Myomesin-1 (MYOM1) of Homo sapiens (Human).